The chain runs to 177 residues: Adenine phosphoribosyltransferase (177 aa).

Belongs to the purine/pyrimidine phosphoribosyltransferase family. As to quaternary structure, homodimer.

The protein localises to the cytoplasm. The enzyme catalyses AMP + diphosphate = 5-phospho-alpha-D-ribose 1-diphosphate + adenine. Its pathway is purine metabolism; AMP biosynthesis via salvage pathway; AMP from adenine: step 1/1. Its function is as follows. Catalyzes a salvage reaction resulting in the formation of AMP, that is energically less costly than de novo synthesis. The chain is Adenine phosphoribosyltransferase from Leptospira interrogans serogroup Icterohaemorrhagiae serovar copenhageni (strain Fiocruz L1-130).